A 493-amino-acid polypeptide reads, in one-letter code: Lysine--tRNA ligase (493 aa).

Glu403 and Glu410 together coordinate Mg(2+).

It belongs to the class-II aminoacyl-tRNA synthetase family. Homodimer. Mg(2+) is required as a cofactor.

The protein localises to the cytoplasm. The enzyme catalyses tRNA(Lys) + L-lysine + ATP = L-lysyl-tRNA(Lys) + AMP + diphosphate. The polypeptide is Lysine--tRNA ligase (Wigglesworthia glossinidia brevipalpis).